We begin with the raw amino-acid sequence, 88 residues long: Small ribosomal subunit protein bS16 (88 aa).

The protein belongs to the bacterial ribosomal protein bS16 family.

The sequence is that of Small ribosomal subunit protein bS16 from Desulfitobacterium hafniense (strain DSM 10664 / DCB-2).